A 335-amino-acid polypeptide reads, in one-letter code: Mitochondrial thiamine diphosphate carrier 1 (335 aa).

Helical transmembrane passes span 13 to 29, 88 to 105, 127 to 150, 182 to 199, 231 to 247, and 304 to 323; these read KRAVIDASAGGVAGAIS, VPALLMVVPYTSIQFAVL, YLSYISGALAGCAATVGSYPFDLL, LYAGLSPTLIEIIPYAGL, SLSSFQLFLCGLASGTV, and GIVPSTIKAAPAGAVTFVAY. Solcar repeat units lie at residues 13–111, 124–210, and 232–329; these read KRAV…VKSF, LSPY…FKRW, and LSSF…ASDW.

This sequence belongs to the mitochondrial carrier (TC 2.A.29) family.

The protein resides in the mitochondrion inner membrane. Its function is as follows. Mitochondrial transporter that mediates uptake of thiamine diphosphate (ThDP) into mitochondria. The sequence is that of Mitochondrial thiamine diphosphate carrier 1 from Arabidopsis thaliana (Mouse-ear cress).